We begin with the raw amino-acid sequence, 532 residues long: KICSTOR complex protein ITFG2 (532 aa).

An FG-GAP 1; atypical repeat occupies 19 to 48 (FPHAICLGDVDNDTLNELVVGDTSGKLSVY). Position 104 is a phosphoserine (S104). The stretch at 126-155 (NTKVMLISDIDGDGRCELVVGYTDRVVRAF) is one FG-GAP 2; atypical repeat. Residues 248 to 271 (PHPQQERLHSPHRQHQASHSPDSS) form a disordered region.

In terms of assembly, part of the KICSTOR complex composed of KPTN, ITFG2, KICS2 and SZT2. SZT2 probably serves as a link between the other three proteins in the KICSTOR complex and may mediate the direct interaction with the GATOR complex via GATOR1. The KICSTOR complex interacts directly with the GATOR1 complex and most probably indirectly with the GATOR2 complex in an amino acid-independent manner.

The protein localises to the lysosome membrane. Its function is as follows. As part of the KICSTOR complex functions in the amino acid-sensing branch of the TORC1 signaling pathway. Recruits, in an amino acid-independent manner, the GATOR1 complex to the lysosomal membranes and allows its interaction with GATOR2 and the RAG GTPases. Functions upstream of the RAG GTPases and is required to negatively regulate mTORC1 signaling in absence of amino acids. In absence of the KICSTOR complex mTORC1 is constitutively localized to the lysosome and activated. The KICSTOR complex is also probably involved in the regulation of mTORC1 by glucose. This Bos taurus (Bovine) protein is KICSTOR complex protein ITFG2.